The chain runs to 214 residues: Metalloproteinase inhibitor 3 (214 aa).

The first 26 residues, 1–26, serve as a signal peptide directing secretion; sequence MVFSTTAALSLLLALSSMQLSEVSEA. Residue Cys27 participates in Zn(2+) binding. Involved in metalloproteinase-binding regions lie at residues 27 to 30 and 91 to 92; these read CTCM and ES. 6 cysteine pairs are disulfide-bonded: Cys27–Cys94, Cys29–Cys121, Cys39–Cys146, Cys148–Cys195, Cys153–Cys158, and Cys166–Cys187. Residues 27–146 enclose the NTR domain; it reads CTCMPNHPQE…GLNHRYQYGC (120 aa). The N-linked (GlcNAc...) asparagine glycan is linked to Asn210.

Belongs to the protease inhibitor I35 (TIMP) family. In terms of tissue distribution, expressed abundantly in brain and cartilage.

The protein resides in the secreted. It localises to the extracellular space. The protein localises to the extracellular matrix. Functionally, complexes with metalloproteinases (such as collagenases) and irreversibly inactivates them by binding to their catalytic zinc cofactor. May form part of a tissue-specific acute response to remodeling stimuli. The chain is Metalloproteinase inhibitor 3 (TIMP3) from Scyliorhinus torazame (Cloudy catshark).